The sequence spans 232 residues: 7-cyano-7-deazaguanine synthase (232 aa).

8–18 (FSGGQDSTTCL) lines the ATP pocket. Residues cysteine 189, cysteine 198, cysteine 201, and cysteine 204 each coordinate Zn(2+).

The protein belongs to the QueC family. Zn(2+) is required as a cofactor.

It carries out the reaction 7-carboxy-7-deazaguanine + NH4(+) + ATP = 7-cyano-7-deazaguanine + ADP + phosphate + H2O + H(+). Its pathway is purine metabolism; 7-cyano-7-deazaguanine biosynthesis. In terms of biological role, catalyzes the ATP-dependent conversion of 7-carboxy-7-deazaguanine (CDG) to 7-cyano-7-deazaguanine (preQ(0)). In Proteus mirabilis (strain HI4320), this protein is 7-cyano-7-deazaguanine synthase.